Here is a 237-residue protein sequence, read N- to C-terminus: Lectin (237 aa).

The N-linked (GlcNAc...) asparagine glycan is linked to asparagine 69. Isoleucine 106 carries the post-translational modification Blocked amino end (Ile). Glutamate 115 and aspartate 117 together coordinate Mn(2+). Aspartate 117, tyrosine 120, asparagine 122, and aspartate 127 together coordinate Ca(2+). Mn(2+) is bound by residues aspartate 127 and histidine 132.

It belongs to the leguminous lectin family. In terms of assembly, tetramer of two alpha and two beta chains. In terms of processing, the N-terminus of alpha chain is blocked. The alpha and beta chains are produced by proteolytic processing, with probably the loss of intervening amino acid(s).

Functionally, D-mannose/D-glucose-binding lectin. Requires Ca(2+) and Mn(2+) ions for full activity. This chain is Lectin, found in Lablab purpureus (Hyacinth bean).